We begin with the raw amino-acid sequence, 254 residues long: Peptide methionine sulfoxide reductase A5 (254 aa).

Positions 1–26 (MARGSAAAAIAGVVWVLLLLVGVASG) are cleaved as a signal peptide.

It belongs to the MsrA Met sulfoxide reductase family.

The enzyme catalyses L-methionyl-[protein] + [thioredoxin]-disulfide + H2O = L-methionyl-(S)-S-oxide-[protein] + [thioredoxin]-dithiol. The catalysed reaction is [thioredoxin]-disulfide + L-methionine + H2O = L-methionine (S)-S-oxide + [thioredoxin]-dithiol. Its function is as follows. Catalyzes the reduction of methionine sulfoxide (MetSO) to methionine in proteins. Plays a protective role against oxidative stress by restoring activity to proteins that have been inactivated by methionine oxidation. MSRA family specifically reduces the MetSO S-enantiomer. This is Peptide methionine sulfoxide reductase A5 (MSRA5) from Oryza sativa subsp. japonica (Rice).